The chain runs to 545 residues: CTP synthase (545 aa).

Positions 1–266 are amidoligase domain; the sequence is MTTRYIFVTG…DDLVVKRFGL (266 aa). S14 is a binding site for CTP. Residue S14 coordinates UTP. Residues 15 to 20 and D72 contribute to the ATP site; that span reads SLGKGI. Mg(2+) contacts are provided by D72 and E140. CTP-binding positions include 147 to 149, 187 to 192, and K223; these read DIE and KTKPTQ. UTP is bound by residues 187-192 and K223; that span reads KTKPTQ. 239 to 241 is a binding site for ATP; that stretch reads KDV. The Glutamine amidotransferase type-1 domain maps to 291–542; it reads VIGMVGKYIE…IAAASAHQKR (252 aa). G352 serves as a coordination point for L-glutamine. The active-site Nucleophile; for glutamine hydrolysis is C379. Residues 380-383, E403, and R470 contribute to the L-glutamine site; that span reads LGMQ. Catalysis depends on residues H515 and E517.

It belongs to the CTP synthase family. Homotetramer.

The enzyme catalyses UTP + L-glutamine + ATP + H2O = CTP + L-glutamate + ADP + phosphate + 2 H(+). The catalysed reaction is L-glutamine + H2O = L-glutamate + NH4(+). It catalyses the reaction UTP + NH4(+) + ATP = CTP + ADP + phosphate + 2 H(+). It participates in pyrimidine metabolism; CTP biosynthesis via de novo pathway; CTP from UDP: step 2/2. Its activity is regulated as follows. Allosterically activated by GTP, when glutamine is the substrate; GTP has no effect on the reaction when ammonia is the substrate. The allosteric effector GTP functions by stabilizing the protein conformation that binds the tetrahedral intermediate(s) formed during glutamine hydrolysis. Inhibited by the product CTP, via allosteric rather than competitive inhibition. Its function is as follows. Catalyzes the ATP-dependent amination of UTP to CTP with either L-glutamine or ammonia as the source of nitrogen. Regulates intracellular CTP levels through interactions with the four ribonucleotide triphosphates. This is CTP synthase from Shewanella baltica (strain OS223).